The following is a 318-amino-acid chain: Ribosomal RNA small subunit methyltransferase H (318 aa).

Residues 37-39, D56, Y83, D104, and Q111 contribute to the S-adenosyl-L-methionine site; that span reads GGH. Positions 293–318 are disordered; that stretch reads EEEIAENRRAAPARLRGAQRIREDAE.

Belongs to the methyltransferase superfamily. RsmH family.

The protein localises to the cytoplasm. The enzyme catalyses cytidine(1402) in 16S rRNA + S-adenosyl-L-methionine = N(4)-methylcytidine(1402) in 16S rRNA + S-adenosyl-L-homocysteine + H(+). Its function is as follows. Specifically methylates the N4 position of cytidine in position 1402 (C1402) of 16S rRNA. In Streptomyces avermitilis (strain ATCC 31267 / DSM 46492 / JCM 5070 / NBRC 14893 / NCIMB 12804 / NRRL 8165 / MA-4680), this protein is Ribosomal RNA small subunit methyltransferase H.